Reading from the N-terminus, the 213-residue chain is Putative glutathione-dependent formaldehyde-activating enzyme (213 aa).

The CENP-V/GFA domain occupies 19–165 (FPGGTLKCLC…FRELGLETYD (147 aa)). Zn(2+) contacts are provided by C26, C28, C47, C49, C52, C94, and C97.

Belongs to the Gfa family. It depends on Zn(2+) as a cofactor.

The catalysed reaction is S-(hydroxymethyl)glutathione = glutathione + formaldehyde. The protein operates within one-carbon metabolism; formaldehyde degradation; formate from formaldehyde (glutathione route): step 1/3. Functionally, catalyzes the condensation of formaldehyde and glutathione to S-hydroxymethylglutathione. The protein is Putative glutathione-dependent formaldehyde-activating enzyme of Podospora anserina (strain S / ATCC MYA-4624 / DSM 980 / FGSC 10383) (Pleurage anserina).